The following is a 567-amino-acid chain: SRSF protein kinase 3 (567 aa).

The span at methionine 1–glycine 16 shows a compositional bias: gly residues. The segment at methionine 1–leucine 36 is disordered. Low complexity predominate over residues serine 17–serine 32. A Phosphoserine modification is found at serine 50. The Protein kinase domain maps to tyrosine 79–leucine 565. ATP is bound by residues leucine 85 to valine 93 and lysine 108. Aspartate 212 serves as the catalytic Proton acceptor. 2 disordered regions span residues glutamine 238–glutamate 283 and alanine 298–serine 351. Polar residues predominate over residues serine 248 to leucine 258. A compositionally biased stretch (basic residues) spans serine 264–lysine 279. Low complexity predominate over residues alanine 327 to serine 348. At serine 330 the chain carries Phosphoserine.

The protein belongs to the protein kinase superfamily. CMGC Ser/Thr protein kinase family. As to expression, expressed in skeletal and heart muscle. Also expressed in the fetal brain.

The protein localises to the nucleus. The protein resides in the cytoplasm. It carries out the reaction L-seryl-[protein] + ATP = O-phospho-L-seryl-[protein] + ADP + H(+). It catalyses the reaction L-threonyl-[protein] + ATP = O-phospho-L-threonyl-[protein] + ADP + H(+). Functionally, serine/arginine-rich protein-specific kinase which specifically phosphorylates its substrates at serine residues located in regions rich in arginine/serine dipeptides, known as RS domains. Phosphorylates the SR splicing factor SRSF1 and the lamin-B receptor (LBR) in vitro. Required for normal muscle development. In Homo sapiens (Human), this protein is SRSF protein kinase 3 (SRPK3).